Consider the following 482-residue polypeptide: Glutamate--tRNA ligase (482 aa).

Positions 9 to 19 (PSPTGPIHVGN) match the 'HIGH' region motif. Zn(2+)-binding residues include C106, C108, C133, and D135. The 'KMSKS' region motif lies at 250 to 254 (KLSKR). K253 is a binding site for ATP.

The protein belongs to the class-I aminoacyl-tRNA synthetase family. Glutamate--tRNA ligase type 1 subfamily. As to quaternary structure, monomer. Zn(2+) serves as cofactor.

It localises to the cytoplasm. It carries out the reaction tRNA(Glu) + L-glutamate + ATP = L-glutamyl-tRNA(Glu) + AMP + diphosphate. Catalyzes the attachment of glutamate to tRNA(Glu) in a two-step reaction: glutamate is first activated by ATP to form Glu-AMP and then transferred to the acceptor end of tRNA(Glu). The protein is Glutamate--tRNA ligase of Symbiobacterium thermophilum (strain DSM 24528 / JCM 14929 / IAM 14863 / T).